The sequence spans 293 residues: Protease HtpX (293 aa).

2 consecutive transmembrane segments (helical) span residues 4–24 and 34–54; these read IALFLLTNLAVMLVFGLVLSL and GLMIMAGLFGFGGAFVSLLMS. His-139 provides a ligand contact to Zn(2+). The active site involves Glu-140. His-143 contributes to the Zn(2+) binding site. Transmembrane regions (helical) follow at residues 158-178 and 193-213; these read VVNTFVIFISRLIAQIAAGFL and MVYFAVSMVLELVFGILASII. Glu-222 serves as a coordination point for Zn(2+).

Belongs to the peptidase M48B family. The cofactor is Zn(2+).

It localises to the cell inner membrane. The sequence is that of Protease HtpX from Yersinia pseudotuberculosis serotype O:1b (strain IP 31758).